A 305-amino-acid polypeptide reads, in one-letter code: Ribosomal RNA small subunit methyltransferase H (305 aa).

S-adenosyl-L-methionine contacts are provided by residues 49–51 (GGH), Asp-68, Phe-100, Asp-116, and Gln-123.

This sequence belongs to the methyltransferase superfamily. RsmH family.

The protein localises to the cytoplasm. It carries out the reaction cytidine(1402) in 16S rRNA + S-adenosyl-L-methionine = N(4)-methylcytidine(1402) in 16S rRNA + S-adenosyl-L-homocysteine + H(+). Specifically methylates the N4 position of cytidine in position 1402 (C1402) of 16S rRNA. The protein is Ribosomal RNA small subunit methyltransferase H of Synechocystis sp. (strain ATCC 27184 / PCC 6803 / Kazusa).